The following is a 702-amino-acid chain: Methionine--tRNA ligase (702 aa).

The short motif at proline 23 to histidine 33 is the 'HIGH' region element. 4 residues coordinate Zn(2+): cysteine 154, cysteine 157, cysteine 167, and cysteine 170. Positions lysine 341 to serine 345 match the 'KMSKS' region motif. Lysine 344 is a binding site for ATP. A disordered region spans residues leucine 562 to proline 593. Polar residues predominate over residues alanine 569–asparagine 578. In terms of domain architecture, tRNA-binding spans aspartate 599–arginine 702.

This sequence belongs to the class-I aminoacyl-tRNA synthetase family. MetG type 1 subfamily. Homodimer. The cofactor is Zn(2+).

It is found in the cytoplasm. It catalyses the reaction tRNA(Met) + L-methionine + ATP = L-methionyl-tRNA(Met) + AMP + diphosphate. In terms of biological role, is required not only for elongation of protein synthesis but also for the initiation of all mRNA translation through initiator tRNA(fMet) aminoacylation. The sequence is that of Methionine--tRNA ligase from Xylella fastidiosa (strain 9a5c).